Reading from the N-terminus, the 498-residue chain is Guanosine-5'-triphosphate,3'-diphosphate pyrophosphatase (498 aa).

The protein belongs to the GppA/Ppx family. GppA subfamily.

The enzyme catalyses guanosine 3'-diphosphate 5'-triphosphate + H2O = guanosine 3',5'-bis(diphosphate) + phosphate + H(+). The protein operates within purine metabolism; ppGpp biosynthesis; ppGpp from GTP: step 2/2. Functionally, catalyzes the conversion of pppGpp to ppGpp. Guanosine pentaphosphate (pppGpp) is a cytoplasmic signaling molecule which together with ppGpp controls the 'stringent response', an adaptive process that allows bacteria to respond to amino acid starvation, resulting in the coordinated regulation of numerous cellular activities. The sequence is that of Guanosine-5'-triphosphate,3'-diphosphate pyrophosphatase from Serratia proteamaculans (strain 568).